The sequence spans 320 residues: Ferrochelatase (320 aa).

Fe cation-binding residues include histidine 194 and glutamate 275.

The protein belongs to the ferrochelatase family.

The protein localises to the cytoplasm. The catalysed reaction is heme b + 2 H(+) = protoporphyrin IX + Fe(2+). Its pathway is porphyrin-containing compound metabolism; protoheme biosynthesis; protoheme from protoporphyrin-IX: step 1/1. Its function is as follows. Catalyzes the ferrous insertion into protoporphyrin IX. The protein is Ferrochelatase of Xylella fastidiosa (strain 9a5c).